The primary structure comprises 300 residues: N-acetylmannosamine kinase (300 aa).

Residues A5–K12 and G132–L139 contribute to the ATP site. 4 residues coordinate Zn(2+): H156, C166, C168, and C173.

This sequence belongs to the ROK (NagC/XylR) family. NanK subfamily. Homodimer.

The catalysed reaction is an N-acyl-D-mannosamine + ATP = an N-acyl-D-mannosamine 6-phosphate + ADP + H(+). The protein operates within amino-sugar metabolism; N-acetylneuraminate degradation; D-fructose 6-phosphate from N-acetylneuraminate: step 2/5. In terms of biological role, catalyzes the phosphorylation of N-acetylmannosamine (ManNAc) to ManNAc-6-P. The protein is N-acetylmannosamine kinase (nanK) of Haemophilus influenzae (strain ATCC 51907 / DSM 11121 / KW20 / Rd).